The following is a 415-amino-acid chain: Trehalose synthase (415 aa).

This sequence belongs to the glycosyltransferase group 1 family. Glycosyltransferase 4 subfamily. Homodimer. Requires Mg(2+) as cofactor.

The catalysed reaction is an NDP-alpha-D-glucose + D-glucose = alpha,alpha-trehalose + a ribonucleoside 5'-diphosphate + H(+). In terms of biological role, synthesizes trehalose from ADP-, UDP- or GDP-glucose and glucose. The chain is Trehalose synthase from Pyrococcus horikoshii (strain ATCC 700860 / DSM 12428 / JCM 9974 / NBRC 100139 / OT-3).